Here is a 330-residue protein sequence, read N- to C-terminus: Diacylglycerol kinase (330 aa).

Residues 1-132 (MRKCARIIYN…VDIGKMNNRY (132 aa)) form the DAGKc domain. Residues 10–14 (NPTSG), Thr-41, 67–73 (GDGTLNE), and Thr-94 contribute to the ATP site. Residues Lys-213, Asp-216, and His-218 each contribute to the Mg(2+) site. Residue Glu-273 is the Proton acceptor of the active site.

The protein belongs to the diacylglycerol/lipid kinase family. As to quaternary structure, homodimer. Mg(2+) is required as a cofactor.

It catalyses the reaction a 1,2-diacyl-sn-glycerol + ATP = a 1,2-diacyl-sn-glycero-3-phosphate + ADP + H(+). Catalyzes the phosphorylation of diacylglycerol (DAG) into phosphatidic acid. Is a key enzyme involved in the production of lipoteichoic acid by reintroducing DAG formed from the breakdown of membrane phospholipids into the phosphatidylglycerol biosynthetic pathway. The protein is Diacylglycerol kinase (dagK) of Staphylococcus haemolyticus (strain JCSC1435).